Here is a 252-residue protein sequence, read N- to C-terminus: ATP synthase subunit a (252 aa).

5 helical membrane-spanning segments follow: residues 33 to 53 (GQVF…AFVA), 92 to 112 (VPFV…GALV), 130 to 150 (DINT…YAGL), 196 to 216 (LVVS…VMVL), and 217 to 237 (GLFT…TYIG).

Belongs to the ATPase A chain family. As to quaternary structure, F-type ATPases have 2 components, CF(1) - the catalytic core - and CF(0) - the membrane proton channel. CF(1) has five subunits: alpha(3), beta(3), gamma(1), delta(1), epsilon(1). CF(0) has four main subunits: a, b, b' and c.

The protein resides in the cellular thylakoid membrane. In terms of biological role, key component of the proton channel; it plays a direct role in the translocation of protons across the membrane. The protein is ATP synthase subunit a of Thermosynechococcus vestitus (strain NIES-2133 / IAM M-273 / BP-1).